A 238-amino-acid polypeptide reads, in one-letter code: Accessory gene regulator protein A (238 aa).

One can recognise a Response regulatory domain in the interval lysine 2–glutamate 125. At aspartate 59 the chain carries 4-aspartylphosphate. The HTH LytTR-type domain occupies isoleucine 143–isoleucine 238.

The protein localises to the cytoplasm. In terms of biological role, required for high-level post-exponential phase expression of a series of secreted proteins. In Staphylococcus epidermidis (strain ATCC 35984 / DSM 28319 / BCRC 17069 / CCUG 31568 / BM 3577 / RP62A), this protein is Accessory gene regulator protein A (agrA).